A 239-amino-acid chain; its full sequence is ATP-dependent dethiobiotin synthetase BioD (239 aa).

15 to 20 (EIGKTF) provides a ligand contact to ATP. Threonine 19 contributes to the Mg(2+) binding site. Lysine 40 is a catalytic residue. ATP contacts are provided by residues aspartate 57, 118–121 (EGVG), and 178–179 (NH). Positions 57 and 118 each coordinate Mg(2+).

It belongs to the dethiobiotin synthetase family. As to quaternary structure, homodimer. Mg(2+) is required as a cofactor.

The protein resides in the cytoplasm. It carries out the reaction (7R,8S)-7,8-diammoniononanoate + CO2 + ATP = (4R,5S)-dethiobiotin + ADP + phosphate + 3 H(+). The protein operates within cofactor biosynthesis; biotin biosynthesis; biotin from 7,8-diaminononanoate: step 1/2. Catalyzes a mechanistically unusual reaction, the ATP-dependent insertion of CO2 between the N7 and N8 nitrogen atoms of 7,8-diaminopelargonic acid (DAPA, also called 7,8-diammoniononanoate) to form a ureido ring. This chain is ATP-dependent dethiobiotin synthetase BioD, found in Burkholderia ambifaria (strain ATCC BAA-244 / DSM 16087 / CCUG 44356 / LMG 19182 / AMMD) (Burkholderia cepacia (strain AMMD)).